The following is a 104-amino-acid chain: L-rhamnose mutarotase (104 aa).

Position 18 (tyrosine 18) interacts with substrate. Histidine 22 acts as the Proton donor in catalysis. Residues tyrosine 41 and 76-77 contribute to the substrate site; that span reads WW.

It belongs to the rhamnose mutarotase family. Homodimer.

The protein localises to the cytoplasm. It carries out the reaction alpha-L-rhamnose = beta-L-rhamnose. It functions in the pathway carbohydrate metabolism; L-rhamnose metabolism. Involved in the anomeric conversion of L-rhamnose. This Bacteroides thetaiotaomicron (strain ATCC 29148 / DSM 2079 / JCM 5827 / CCUG 10774 / NCTC 10582 / VPI-5482 / E50) protein is L-rhamnose mutarotase.